The following is a 139-amino-acid chain: Orientotoxin-2 (139 aa).

As to expression, expressed by the venom gland.

It localises to the secreted. The catalysed reaction is a 1,2-diacyl-sn-glycero-3-phosphocholine + H2O = a 1-acyl-sn-glycero-3-phosphocholine + a fatty acid + H(+). Its function is as follows. Has a highly toxic phospholipase A2 activity. This chain is Orientotoxin-2, found in Vespa orientalis (Oriental hornet).